The primary structure comprises 130 residues: Small ribosomal subunit protein uS9 (130 aa).

Belongs to the universal ribosomal protein uS9 family.

The polypeptide is Small ribosomal subunit protein uS9 (Burkholderia ambifaria (strain MC40-6)).